We begin with the raw amino-acid sequence, 116 residues long: Large ribosomal subunit protein bL17 (116 aa).

The protein belongs to the bacterial ribosomal protein bL17 family. Part of the 50S ribosomal subunit. Contacts protein L32.

The polypeptide is Large ribosomal subunit protein bL17 (Chloroflexus aggregans (strain MD-66 / DSM 9485)).